Reading from the N-terminus, the 76-residue chain is Esculentin-2MT3 (76 aa).

The N-terminal stretch at 1–22 (MFTLKKSMLLLFFLGTISLSLC) is a signal peptide. The propeptide at 23 to 37 (EEERNADEDDGEKEV) is removed in mature form. C70 and C76 are disulfide-bonded.

This sequence belongs to the frog skin active peptide (FSAP) family. Esculentin subfamily. As to expression, expressed by the skin glands.

It is found in the secreted. Antimicrobial peptide. The polypeptide is Esculentin-2MT3 (Amolops mantzorum (Sichuan torrent frog)).